The primary structure comprises 885 residues: Dipeptidyl peptidase 9 (885 aa).

Active-site charge relay system residues include serine 752, aspartate 830, and histidine 862. Serine 752 contacts Val-boroPro.

The protein belongs to the peptidase S9B family. DPPIV subfamily. In terms of assembly, homodimer. Forms a ternary complex with NLRP1, composed of a DPP9 homodimer, one full-length NLRP1 protein, and one cleaved C-terminus of NLRP1 (NACHT, LRR and PYD domains-containing protein 1, C-terminus).

The protein resides in the nucleus. It catalyses the reaction Release of an N-terminal dipeptide, Xaa-Yaa-|-Zaa-, from a polypeptide, preferentially when Yaa is Pro, provided Zaa is neither Pro nor hydroxyproline.. Functionally, dipeptidyl peptidase that cleaves off N-terminal dipeptides from proteins having a Pro or Ala residue at position 2. Acts as a key inhibitor of the NLRP1 inflammasome. The protein is Dipeptidyl peptidase 9 of Danio rerio (Zebrafish).